We begin with the raw amino-acid sequence, 510 residues long: Putative folylpolyglutamate synthase (510 aa).

Gly98–Ser101 serves as a coordination point for ATP. Mg(2+) is bound by residues Ser122, Glu189, and His217. ATP-binding residues include Arg342 and Asp357.

The protein belongs to the folylpolyglutamate synthase family. A monovalent cation serves as cofactor.

The protein resides in the mitochondrion inner membrane. It localises to the mitochondrion matrix. Its subcellular location is the cytoplasm. The enzyme catalyses (6S)-5,6,7,8-tetrahydrofolyl-(gamma-L-Glu)(n) + L-glutamate + ATP = (6S)-5,6,7,8-tetrahydrofolyl-(gamma-L-Glu)(n+1) + ADP + phosphate + H(+). It functions in the pathway cofactor biosynthesis; tetrahydrofolylpolyglutamate biosynthesis. Catalyzes conversion of folates to polyglutamate derivatives allowing concentration of folate compounds in the cell and the intracellular retention of these cofactors, which are important substrates for most of the folate-dependent enzymes that are involved in one-carbon transfer reactions involved in purine, pyrimidine and amino acid synthesis. The sequence is that of Putative folylpolyglutamate synthase from Caenorhabditis elegans.